Consider the following 252-residue polypeptide: Phosphoglycolate phosphatase (252 aa).

Asp13 (nucleophile) is an active-site residue. The Mg(2+) site is built by Asp13, Asp15, and Asp192.

Belongs to the HAD-like hydrolase superfamily. CbbY/CbbZ/Gph/YieH family. In terms of assembly, monomer. Mg(2+) serves as cofactor. It depends on chloride as a cofactor.

The enzyme catalyses 2-phosphoglycolate + H2O = glycolate + phosphate. It functions in the pathway organic acid metabolism; glycolate biosynthesis; glycolate from 2-phosphoglycolate: step 1/1. Specifically catalyzes the dephosphorylation of 2-phosphoglycolate. Is involved in the dissimilation of the intracellular 2-phosphoglycolate formed during the DNA repair of 3'-phosphoglycolate ends, a major class of DNA lesions induced by oxidative stress. This Shigella dysenteriae serotype 1 (strain Sd197) protein is Phosphoglycolate phosphatase.